The primary structure comprises 111 residues: U-scoloptoxin(16)-Er8a (111 aa).

A signal peptide spans Met-1–Gly-26.

It belongs to the scoloptoxin-16 family. In terms of processing, contains 4 disulfide bonds. As to expression, expressed by the venom gland.

The protein localises to the secreted. The protein is U-scoloptoxin(16)-Er8a of Ethmostigmus rubripes (Giant centipede).